The following is a 682-amino-acid chain: Methionine--tRNA ligase (682 aa).

The 'HIGH' region motif lies at 15-25; the sequence is PYANGAIHLGH. Residues Cys-146, Cys-149, Cys-159, and Cys-162 each contribute to the Zn(2+) site. The short motif at 331–335 is the 'KMSKS' region element; the sequence is KMSKS. Lys-334 serves as a coordination point for ATP. The region spanning 580–682 is the tRNA-binding domain; it reads DFAKLDMRVA…NGVTAGMQVK (103 aa).

This sequence belongs to the class-I aminoacyl-tRNA synthetase family. MetG type 1 subfamily. In terms of assembly, homodimer. Requires Zn(2+) as cofactor.

The protein resides in the cytoplasm. It carries out the reaction tRNA(Met) + L-methionine + ATP = L-methionyl-tRNA(Met) + AMP + diphosphate. In terms of biological role, is required not only for elongation of protein synthesis but also for the initiation of all mRNA translation through initiator tRNA(fMet) aminoacylation. This chain is Methionine--tRNA ligase, found in Haemophilus influenzae (strain PittGG).